Consider the following 122-residue polypeptide: Conotoxin flf14.2 (122 aa).

The first 22 residues, 1–22, serve as a signal peptide directing secretion; that stretch reads MGFRVLVLIVMVTTSALPFTFS. A propeptide spanning residues 23–96 is cleaved from the precursor; sequence EESGRSPFRP…AESPVGQKRW (74 aa). The disordered stretch occupies residues 53 to 91; that stretch reads RADGQPSDMRQPEMRRPEMRRPEVRRPEVRQPEFAESPV. Residues 62 to 85 are compositionally biased toward basic and acidic residues; it reads RQPEMRRPEMRRPEVRRPEVRQPE. Intrachain disulfides connect Cys101–Cys121 and Cys105–Cys117.

Belongs to the conotoxin R superfamily. In terms of tissue distribution, expressed by the venom duct.

Its subcellular location is the secreted. The protein is Conotoxin flf14.2 of Conus anabathrum floridanus (Florida cone).